We begin with the raw amino-acid sequence, 168 residues long: Transcription elongation factor GreB (168 aa).

The stretch at 61 to 84 (KKMLREIDSRVRFLRKRLENLKVV) forms a coiled coil.

It belongs to the GreA/GreB family. GreB subfamily.

In terms of biological role, necessary for efficient RNA polymerase transcription elongation past template-encoded arresting sites. The arresting sites in DNA have the property of trapping a certain fraction of elongating RNA polymerases that pass through, resulting in locked ternary complexes. Cleavage of the nascent transcript by cleavage factors such as GreA or GreB allows the resumption of elongation from the new 3'terminus. GreB releases sequences of up to 9 nucleotides in length. This chain is Transcription elongation factor GreB, found in Pseudomonas aeruginosa (strain ATCC 15692 / DSM 22644 / CIP 104116 / JCM 14847 / LMG 12228 / 1C / PRS 101 / PAO1).